We begin with the raw amino-acid sequence, 695 residues long: RING finger protein 145 (695 aa).

Transmembrane regions (helical) follow at residues Tyr53–Pro73, Leu77–Ser97, Phe123–Thr143, Ile146–Glu166, Ile168–Ala188, Leu225–Thr245, Tyr275–Cys295, Thr316–Val336, Phe340–Ile360, Ser384–Phe404, Leu410–Val430, Leu460–Gly480, and Trp482–Ala502. An RING-type; atypical zinc finger spans residues Cys537–His575. The span at Ser589–Pro604 shows a compositional bias: polar residues. The disordered stretch occupies residues Ser589–Pro608.

Its subcellular location is the membrane. In Xenopus laevis (African clawed frog), this protein is RING finger protein 145 (rnf145).